Reading from the N-terminus, the 393-residue chain is Elongation factor Tu (393 aa).

Positions 10–203 (KPHVNIGTIG…AVDEFIPEPV (194 aa)) constitute a tr-type G domain. The interval 19–26 (GHVDHGKT) is G1. 19–26 (GHVDHGKT) serves as a coordination point for GTP. A Mg(2+)-binding site is contributed by threonine 26. Positions 60-64 (GITIS) are G2. The segment at 81 to 84 (DCPG) is G3. GTP-binding positions include 81–85 (DCPGH) and 136–139 (NKVD). The tract at residues 136–139 (NKVD) is G4. The G5 stretch occupies residues 173–175 (SAL).

The protein belongs to the TRAFAC class translation factor GTPase superfamily. Classic translation factor GTPase family. EF-Tu/EF-1A subfamily. As to quaternary structure, monomer.

It localises to the cytoplasm. It catalyses the reaction GTP + H2O = GDP + phosphate + H(+). In terms of biological role, GTP hydrolase that promotes the GTP-dependent binding of aminoacyl-tRNA to the A-site of ribosomes during protein biosynthesis. In Chlorobium limicola (strain DSM 245 / NBRC 103803 / 6330), this protein is Elongation factor Tu.